Reading from the N-terminus, the 227-residue chain is UPF0758 protein Psyc_1834 (227 aa).

The region spanning 102–224 (GLGRSQMVKD…TLSYAENCLA (123 aa)) is the MPN domain. The Zn(2+) site is built by H173, H175, and D186. The short motif at 173 to 186 (HNHPHTDATPSTAD) is the JAMM motif element.

It belongs to the UPF0758 family.

The chain is UPF0758 protein Psyc_1834 from Psychrobacter arcticus (strain DSM 17307 / VKM B-2377 / 273-4).